The chain runs to 164 residues: Transmembrane protein 234 (164 aa).

3 helical membrane-spanning segments follow: residues 1 to 21 (MAAS…WGGT), 82 to 102 (LAVP…GKAL), and 112 to 132 (VAGM…SVPW).

This sequence belongs to the TMEM234 family.

It is found in the membrane. This chain is Transmembrane protein 234 (TMEM234), found in Homo sapiens (Human).